The primary structure comprises 127 residues: Interacting with cytoskeleton protein 1 (127 aa).

Its subcellular location is the vacuole membrane. Its function is as follows. Required for viability of cells lacking mtDNA. This chain is Interacting with cytoskeleton protein 1 (ICY1), found in Saccharomyces cerevisiae (strain ATCC 204508 / S288c) (Baker's yeast).